Here is a 158-residue protein sequence, read N- to C-terminus: C-type lectin mannose-binding isoform (158 aa).

The signal sequence occupies residues Met1–Glu20. 3 cysteine pairs are disulfide-bonded: Cys26/Cys37, Cys54/Cys154, and Cys129/Cys146. The C-type lectin domain occupies Lys33–Gln155. Positions Glu119–Asn121 match the Mannose-binding motif. Asn121 carries N-linked (GlcNAc...) asparagine glycosylation. Positions 127, 142, and 143 each coordinate Ca(2+).

This sequence belongs to the true venom lectin family. As to quaternary structure, homodimer; disulfide-linked. Expressed by the venom gland.

It localises to the secreted. Its function is as follows. Mannose-binding lectin that binds to and agglutinates erythrocytes in a calcium-dependent manner. This Notechis scutatus scutatus (Mainland tiger snake) protein is C-type lectin mannose-binding isoform.